Here is a 298-residue protein sequence, read N- to C-terminus: Mitochondrial nicotinamide adenine dinucleotide transporter SLC25A51 (298 aa).

A compositionally biased stretch (basic and acidic residues) spans 1–11; it reads MMDSEAHEKRP. Residues 1-21 are disordered; that stretch reads MMDSEAHEKRPPMLTSSNQDL. Solcar repeat units follow at residues 28 to 108, 117 to 201, and 214 to 297; these read VGDM…LSRL, PEFA…IKES, and NDFI…LLKI. 6 helical membrane passes run 36 to 56, 85 to 105, 119 to 139, 180 to 200, 216 to 236, and 269 to 290; these read CGYC…KILF, LPPL…YEDL, FATR…LTPF, ILFR…PIKE, FICG…INVV, and LFRG…INAT.

Belongs to the mitochondrial carrier (TC 2.A.29) family.

It localises to the mitochondrion inner membrane. It catalyses the reaction NAD(+)(in) = NAD(+)(out). Functionally, mitochondrial membrane carrier protein that mediates the import of NAD(+) into mitochondria. Mitochondrial NAD(+) is required for glycolysis and mitochondrial respiration. Compared to SLC25A52, SLC25A51-mediated transport is essential for the import of NAD(+) in mitochondria. The transport mechanism, uniport or antiport, its electrogenicity and substrate selectivity, remain to be elucidated. The protein is Mitochondrial nicotinamide adenine dinucleotide transporter SLC25A51 of Mus musculus (Mouse).